The following is a 172-amino-acid chain: SsrA-binding protein (172 aa).

Belongs to the SmpB family.

It localises to the cytoplasm. Functionally, required for rescue of stalled ribosomes mediated by trans-translation. Binds to transfer-messenger RNA (tmRNA), required for stable association of tmRNA with ribosomes. tmRNA and SmpB together mimic tRNA shape, replacing the anticodon stem-loop with SmpB. tmRNA is encoded by the ssrA gene; the 2 termini fold to resemble tRNA(Ala) and it encodes a 'tag peptide', a short internal open reading frame. During trans-translation Ala-aminoacylated tmRNA acts like a tRNA, entering the A-site of stalled ribosomes, displacing the stalled mRNA. The ribosome then switches to translate the ORF on the tmRNA; the nascent peptide is terminated with the 'tag peptide' encoded by the tmRNA and targeted for degradation. The ribosome is freed to recommence translation, which seems to be the essential function of trans-translation. This is SsrA-binding protein from Dehalococcoides mccartyi (strain ATCC BAA-2266 / KCTC 15142 / 195) (Dehalococcoides ethenogenes (strain 195)).